A 213-amino-acid polypeptide reads, in one-letter code: GTP cyclohydrolase 1 (213 aa).

Residues 1-27 form a disordered region; that stretch reads MDDVVKSLLQRTTSSLTKPAPARPSRE. Residues cysteine 100, histidine 103, and cysteine 172 each contribute to the Zn(2+) site.

The protein belongs to the GTP cyclohydrolase I family. In terms of assembly, homomer.

It catalyses the reaction GTP + H2O = 7,8-dihydroneopterin 3'-triphosphate + formate + H(+). It participates in cofactor biosynthesis; 7,8-dihydroneopterin triphosphate biosynthesis; 7,8-dihydroneopterin triphosphate from GTP: step 1/1. The chain is GTP cyclohydrolase 1 from Beijerinckia indica subsp. indica (strain ATCC 9039 / DSM 1715 / NCIMB 8712).